A 234-amino-acid chain; its full sequence is Coiled-coil domain-containing protein 194 (234 aa).

The first 43 residues, 1–43 (MAEPGPEPGRAWRLLALCGAAVFLAAAAAGGALVAWNLAASTA), serve as a signal peptide directing secretion. The segment at 44–63 (RSPRCPEPEQMNATVRPPDS) is disordered. Positions 67–171 (VEELRRRLAE…LQRAGAAEAA (105 aa)) form a coiled coil. Residues 194 to 234 (GTLRKESRLRPRSGSRTKPSISHRPKSGSTKGCRRPPRDPQ) are disordered. The span at 203 to 219 (RPRSGSRTKPSISHRPK) shows a compositional bias: basic residues.

The chain is Coiled-coil domain-containing protein 194 from Mus musculus (Mouse).